Consider the following 348-residue polypeptide: Dihydroorotase (348 aa).

Zn(2+) contacts are provided by H17 and H19. Substrate is bound by residues 19–21 and N45; that span reads HLR. Zn(2+) contacts are provided by K103, H140, and H178. K103 is modified (N6-carboxylysine). H140 contacts substrate. L223 is a binding site for substrate. Residue D251 participates in Zn(2+) binding. D251 is a catalytic residue. H255 and A267 together coordinate substrate.

Belongs to the metallo-dependent hydrolases superfamily. DHOase family. Class II DHOase subfamily. Homodimer. Zn(2+) serves as cofactor. The cofactor is Co(2+). Mg(2+) is required as a cofactor. It depends on Ni(2+) as a cofactor.

It catalyses the reaction (S)-dihydroorotate + H2O = N-carbamoyl-L-aspartate + H(+). Its pathway is pyrimidine metabolism; UMP biosynthesis via de novo pathway; (S)-dihydroorotate from bicarbonate: step 3/3. Functionally, catalyzes the reversible cyclization of carbamoyl aspartate to dihydroorotate. The chain is Dihydroorotase from Klebsiella pneumoniae subsp. pneumoniae (strain ATCC 700721 / MGH 78578).